The sequence spans 520 residues: Phospholipase C A (520 aa).

The tat-type signal signal peptide spans 1-38; the sequence is MSASPLLGMSRREFLTKLTGAGAAAFLMDWAAPVIEKA.

The protein belongs to the bacterial phospholipase C family. Post-translationally, predicted to be exported by the Tat system. The position of the signal peptide cleavage has not been experimentally proven.

The protein resides in the secreted. It is found in the cell wall. It catalyses the reaction a 1,2-diacyl-sn-glycero-3-phosphocholine + H2O = phosphocholine + a 1,2-diacyl-sn-glycerol + H(+). Its function is as follows. Involved in virulence. Induces cytotoxic effects on mouse macrophage cell lines, via direct or indirect enzymatic hydrolysis of cell membrane phospholipids. Hydrolyzes phosphatidylcholine. The protein is Phospholipase C A of Mycobacterium tuberculosis (strain CDC 1551 / Oshkosh).